The following is a 437-amino-acid chain: Glutamate-1-semialdehyde 2,1-aminomutase (437 aa).

At lysine 273 the chain carries N6-(pyridoxal phosphate)lysine.

It belongs to the class-III pyridoxal-phosphate-dependent aminotransferase family. HemL subfamily. As to quaternary structure, homodimer. The cofactor is pyridoxal 5'-phosphate.

The protein localises to the cytoplasm. It carries out the reaction (S)-4-amino-5-oxopentanoate = 5-aminolevulinate. It functions in the pathway porphyrin-containing compound metabolism; protoporphyrin-IX biosynthesis; 5-aminolevulinate from L-glutamyl-tRNA(Glu): step 2/2. The protein is Glutamate-1-semialdehyde 2,1-aminomutase of Chlamydia felis (strain Fe/C-56) (Chlamydophila felis).